We begin with the raw amino-acid sequence, 239 residues long: Ribonuclease 3 (239 aa).

The 124-residue stretch at 18 to 141 folds into the RNase III domain; that stretch reads YLTLEKALGY…LMAGVYLEAG (124 aa). E54 lines the Mg(2+) pocket. The active site involves D58. Mg(2+) contacts are provided by S127 and E130. E130 is a catalytic residue. In terms of domain architecture, DRBM spans 168–237; sequence DYKTALQELT…AYQALQKLKE (70 aa).

The protein belongs to the ribonuclease III family. In terms of assembly, homodimer. Mg(2+) is required as a cofactor.

It is found in the cytoplasm. The catalysed reaction is Endonucleolytic cleavage to 5'-phosphomonoester.. Digests double-stranded RNA. Involved in the processing of primary rRNA transcript to yield the immediate precursors to the large and small rRNAs (23S and 16S). Processes some mRNAs, and tRNAs when they are encoded in the rRNA operon. Processes pre-crRNA and tracrRNA of type II CRISPR loci if present in the organism. In Helicobacter pylori (strain P12), this protein is Ribonuclease 3.